The following is a 410-amino-acid chain: D-amino acid dehydrogenase (410 aa).

9 to 14 contacts FAD; sequence GGGIVG.

The protein belongs to the DadA oxidoreductase family. FAD is required as a cofactor.

Its subcellular location is the cell inner membrane. It catalyses the reaction a D-alpha-amino acid + a quinone + H2O = a 2-oxocarboxylate + a quinol + NH4(+). With respect to regulation, activity is markedly inhibited by benzoate, and moderately by SH reagents such as p-hydroxymercuribenzoate, iodoacetamide, and iodoacetate. In terms of biological role, catalyzes the oxidative deamination of D-amino acids. Has broad substrate specificity; is mostly active on D-proline, and to a lesser extent, on several other D-amino acids such as D-alanine, D-phenylalanine and D-serine. Mediates electron transport from D-proline to coenzyme Q1 in vitro, and is involved in the electron transport chain from D-proline to the c-type cytochrome in vivo. The polypeptide is D-amino acid dehydrogenase (Helicobacter pylori (Campylobacter pylori)).